The chain runs to 444 residues: Phosphoglucosamine mutase (444 aa).

Catalysis depends on Ser-102, which acts as the Phosphoserine intermediate. 4 residues coordinate Mg(2+): Ser-102, Asp-241, Asp-243, and Asp-245. The residue at position 102 (Ser-102) is a Phosphoserine.

Belongs to the phosphohexose mutase family. Mg(2+) serves as cofactor. Post-translationally, activated by phosphorylation.

It carries out the reaction alpha-D-glucosamine 1-phosphate = D-glucosamine 6-phosphate. Functionally, catalyzes the conversion of glucosamine-6-phosphate to glucosamine-1-phosphate. This Haemophilus ducreyi (strain 35000HP / ATCC 700724) protein is Phosphoglucosamine mutase.